We begin with the raw amino-acid sequence, 49 residues long: Large ribosomal subunit protein bL33 (49 aa).

Belongs to the bacterial ribosomal protein bL33 family.

This chain is Large ribosomal subunit protein bL33, found in Clostridium botulinum (strain ATCC 19397 / Type A).